The following is a 227-amino-acid chain: Uridylate kinase (227 aa).

9-10 (GS) contributes to the ATP binding site. Residue Gly44 participates in UMP binding. Gly45 and Arg49 together coordinate ATP. Residues Asp66 and 114-120 (TVPGHTT) each bind UMP. Residues Thr140, Phe146, and Asp149 each contribute to the ATP site.

Belongs to the UMP kinase family. In terms of assembly, homohexamer.

It is found in the cytoplasm. It carries out the reaction UMP + ATP = UDP + ADP. Its pathway is pyrimidine metabolism; CTP biosynthesis via de novo pathway; UDP from UMP (UMPK route): step 1/1. Inhibited by UTP. Functionally, catalyzes the reversible phosphorylation of UMP to UDP. The polypeptide is Uridylate kinase (Natronomonas pharaonis (strain ATCC 35678 / DSM 2160 / CIP 103997 / JCM 8858 / NBRC 14720 / NCIMB 2260 / Gabara) (Halobacterium pharaonis)).